We begin with the raw amino-acid sequence, 419 residues long: Adenylosuccinate synthetase (419 aa).

Residues 12 to 18 and 40 to 42 each bind GTP; these read GDEGKGK and GHT. The active-site Proton acceptor is Asp13. Mg(2+) contacts are provided by Asp13 and Gly40. IMP contacts are provided by residues 13-16, 38-41, Thr128, Arg142, Gln220, Thr235, and Arg299; these read DEGK and NAGH. His41 functions as the Proton donor in the catalytic mechanism. Residue 295–301 coordinates substrate; the sequence is SITKRPR. GTP is bound by residues Arg301, 327–329, and 407–409; these read KSD and SLG.

This sequence belongs to the adenylosuccinate synthetase family. As to quaternary structure, homodimer. Mg(2+) is required as a cofactor.

The protein localises to the cytoplasm. The enzyme catalyses IMP + L-aspartate + GTP = N(6)-(1,2-dicarboxyethyl)-AMP + GDP + phosphate + 2 H(+). Its pathway is purine metabolism; AMP biosynthesis via de novo pathway; AMP from IMP: step 1/2. In terms of biological role, plays an important role in the de novo pathway of purine nucleotide biosynthesis. Catalyzes the first committed step in the biosynthesis of AMP from IMP. This Azobacteroides pseudotrichonymphae genomovar. CFP2 protein is Adenylosuccinate synthetase.